We begin with the raw amino-acid sequence, 96 residues long: Progonadoliberin-1 (96 aa).

The signal sequence occupies residues Met-1–Cys-26. Gln-27 carries the pyrrolidone carboxylic acid modification. Gly-36 bears the Glycine amide mark.

This sequence belongs to the GnRH family. Preoptic area of the brain.

Its subcellular location is the secreted. Functionally, stimulates the secretion of gonadotropins. The chain is Progonadoliberin-1 (gnrh1) from Verasper moseri (Barfin flounder).